Here is a 351-residue protein sequence, read N- to C-terminus: ATP-dependent protease ATP-binding subunit-like protein (351 aa).

Residues 1 to 26 (MPYITDMLRDRNSAATPPAEERSEPV) form a disordered region. ATP is bound at residue 79–86 (GPTGVGKT).

This sequence belongs to the ClpA/ClpB family.

This is ATP-dependent protease ATP-binding subunit-like protein from Rhodococcus erythropolis (Arthrobacter picolinophilus).